We begin with the raw amino-acid sequence, 364 residues long: tRNA 2-selenouridine synthase (364 aa).

The Rhodanese domain occupies 15 to 138 (FVNDTPLMDM…LRRFLIETID (124 aa)). C98 functions as the S-selanylcysteine intermediate in the catalytic mechanism.

Belongs to the SelU family. As to quaternary structure, monomer.

The enzyme catalyses 5-methylaminomethyl-2-thiouridine(34) in tRNA + selenophosphate + (2E)-geranyl diphosphate + H2O + H(+) = 5-methylaminomethyl-2-selenouridine(34) in tRNA + (2E)-thiogeraniol + phosphate + diphosphate. It carries out the reaction 5-methylaminomethyl-2-thiouridine(34) in tRNA + (2E)-geranyl diphosphate = 5-methylaminomethyl-S-(2E)-geranyl-thiouridine(34) in tRNA + diphosphate. The catalysed reaction is 5-methylaminomethyl-S-(2E)-geranyl-thiouridine(34) in tRNA + selenophosphate + H(+) = 5-methylaminomethyl-2-(Se-phospho)selenouridine(34) in tRNA + (2E)-thiogeraniol. It catalyses the reaction 5-methylaminomethyl-2-(Se-phospho)selenouridine(34) in tRNA + H2O = 5-methylaminomethyl-2-selenouridine(34) in tRNA + phosphate. Involved in the post-transcriptional modification of the uridine at the wobble position (U34) of tRNA(Lys), tRNA(Glu) and tRNA(Gln). Catalyzes the conversion of 2-thiouridine (S2U-RNA) to 2-selenouridine (Se2U-RNA). Acts in a two-step process involving geranylation of 2-thiouridine (S2U) to S-geranyl-2-thiouridine (geS2U) and subsequent selenation of the latter derivative to 2-selenouridine (Se2U) in the tRNA chain. The polypeptide is tRNA 2-selenouridine synthase (Photobacterium profundum (strain SS9)).